A 414-amino-acid polypeptide reads, in one-letter code: Histidine--tRNA ligase (414 aa).

It belongs to the class-II aminoacyl-tRNA synthetase family. As to quaternary structure, homodimer.

The protein resides in the cytoplasm. The catalysed reaction is tRNA(His) + L-histidine + ATP = L-histidyl-tRNA(His) + AMP + diphosphate + H(+). The chain is Histidine--tRNA ligase from Endomicrobium trichonymphae.